The following is a 250-amino-acid chain: UDP-2,3-diacylglucosamine hydrolase (250 aa).

Residues D8, H10, D41, N79, and H114 each contribute to the Mn(2+) site. Position 79 to 80 (79 to 80 (NR)) interacts with substrate. Residues D122, S160, Q167, and H195 each contribute to the substrate site. Mn(2+) is bound by residues H195 and H197.

This sequence belongs to the LpxH family. Mn(2+) is required as a cofactor.

The protein resides in the cell inner membrane. The enzyme catalyses UDP-2-N,3-O-bis[(3R)-3-hydroxytetradecanoyl]-alpha-D-glucosamine + H2O = 2-N,3-O-bis[(3R)-3-hydroxytetradecanoyl]-alpha-D-glucosaminyl 1-phosphate + UMP + 2 H(+). It participates in glycolipid biosynthesis; lipid IV(A) biosynthesis; lipid IV(A) from (3R)-3-hydroxytetradecanoyl-[acyl-carrier-protein] and UDP-N-acetyl-alpha-D-glucosamine: step 4/6. Functionally, hydrolyzes the pyrophosphate bond of UDP-2,3-diacylglucosamine to yield 2,3-diacylglucosamine 1-phosphate (lipid X) and UMP by catalyzing the attack of water at the alpha-P atom. Involved in the biosynthesis of lipid A, a phosphorylated glycolipid that anchors the lipopolysaccharide to the outer membrane of the cell. The polypeptide is UDP-2,3-diacylglucosamine hydrolase (Nitrosococcus oceani (strain ATCC 19707 / BCRC 17464 / JCM 30415 / NCIMB 11848 / C-107)).